Here is a 221-residue protein sequence, read N- to C-terminus: Ependymin-2 (221 aa).

The first 21 residues, 1-21 (MQDFAFAALSIWLCLGATALA), serve as a signal peptide directing secretion. 3 N-linked (GlcNAc...) asparagine glycosylation sites follow: Asn33, Asn73, and Asn97.

Belongs to the ependymin family. Binds calcium through the terminal sialic acids. As to expression, EPDs are synthesized in the meninx and secreted in the cerebrospinal fluid.

Its subcellular location is the secreted. Functionally, may play a role in neural plasticity. May be involved during axon regeneration. This chain is Ependymin-2 (epd2), found in Oncorhynchus mykiss (Rainbow trout).